Here is a 147-residue protein sequence, read N- to C-terminus: Histone-lysine N-methyltransferase, H3 lysine-37 specific (147 aa).

The 109-residue stretch at 8–116 folds into the SET domain; the sequence is SPLEIRDTER…TNEELCISYG (109 aa).

Belongs to the class V-like SAM-binding methyltransferase superfamily. Homodimer.

It is found in the cytoplasm. It localises to the nucleus. The enzyme catalyses L-lysyl(37)-[histone H3] + S-adenosyl-L-methionine = N(6)-methyl-L-lysyl(37)-[histone H3] + S-adenosyl-L-homocysteine + H(+). It catalyses the reaction N(6)-methyl-L-lysyl(37)-[histone H3] + S-adenosyl-L-methionine = N(6),N(6)-dimethyl-L-lysyl(37)-[histone H3] + S-adenosyl-L-homocysteine + H(+). The catalysed reaction is N(6),N(6)-dimethyl-L-lysyl(37)-[histone H3] + S-adenosyl-L-methionine = N(6),N(6),N(6)-trimethyl-L-lysyl(37)-[histone H3] + S-adenosyl-L-homocysteine + H(+). Histone lysine methyltransferase that specifically mono-, di-, and trimethylates 'Lys-37' of histone H3 to regulate sporulation. In Schizosaccharomyces pombe (strain 972 / ATCC 24843) (Fission yeast), this protein is Histone-lysine N-methyltransferase, H3 lysine-37 specific.